Consider the following 88-residue polypeptide: Acylphosphatase (88 aa).

One can recognise an Acylphosphatase-like domain in the interval 3–88 (RLVALVKGRV…EAGLKGFHVY (86 aa)). Catalysis depends on residues Arg-18 and Asn-36.

Belongs to the acylphosphatase family.

The enzyme catalyses an acyl phosphate + H2O = a carboxylate + phosphate + H(+). This chain is Acylphosphatase (acyP), found in Thermus thermophilus (strain ATCC BAA-163 / DSM 7039 / HB27).